Consider the following 304-residue polypeptide: Cytochrome c biogenesis protein CcsA (304 aa).

8 helical membrane-spanning segments follow: residues leucine 8–phenylalanine 28, proline 37–leucine 57, glycine 63–leucine 83, isoleucine 96–leucine 116, valine 141–valine 161, threonine 212–asparagine 232, threonine 246–leucine 263, and valine 275–isoleucine 295.

The protein belongs to the CcmF/CycK/Ccl1/NrfE/CcsA family. In terms of assembly, may interact with ccs1.

The protein localises to the cellular thylakoid membrane. Required during biogenesis of c-type cytochromes (cytochrome c6 and cytochrome f) at the step of heme attachment. The polypeptide is Cytochrome c biogenesis protein CcsA (Synechococcus sp. (strain CC9902)).